We begin with the raw amino-acid sequence, 134 residues long: Large-conductance mechanosensitive channel (134 aa).

A run of 2 helical transmembrane segments spans residues 16–36 (VIDL…VTAL) and 81–101 (GDFL…FIIV).

Belongs to the MscL family. In terms of assembly, homopentamer.

The protein resides in the cell inner membrane. In terms of biological role, channel that opens in response to stretch forces in the membrane lipid bilayer. May participate in the regulation of osmotic pressure changes within the cell. The polypeptide is Large-conductance mechanosensitive channel (Xylella fastidiosa (strain 9a5c)).